We begin with the raw amino-acid sequence, 491 residues long: 3-octaprenyl-4-hydroxybenzoate carboxy-lyase (491 aa).

N172 lines the Mn(2+) pocket. Prenylated FMN contacts are provided by residues I175–R177, R189–L191, and R194–G195. E238 is a binding site for Mn(2+). The active-site Proton donor is the D287.

It belongs to the UbiD family. Homohexamer. Prenylated FMN serves as cofactor. Mn(2+) is required as a cofactor.

The protein localises to the cell membrane. The enzyme catalyses a 4-hydroxy-3-(all-trans-polyprenyl)benzoate + H(+) = a 2-(all-trans-polyprenyl)phenol + CO2. It participates in cofactor biosynthesis; ubiquinone biosynthesis. In terms of biological role, catalyzes the decarboxylation of 3-octaprenyl-4-hydroxy benzoate to 2-octaprenylphenol, an intermediate step in ubiquinone biosynthesis. The polypeptide is 3-octaprenyl-4-hydroxybenzoate carboxy-lyase (Klebsiella pneumoniae subsp. pneumoniae (strain ATCC 700721 / MGH 78578)).